A 310-amino-acid polypeptide reads, in one-letter code: MMLTVTMNPSIDIAYQLDDLKVDTVNRVIETHKTPGGKGLNVTRVLSQLGDDVLASGLLGGKLGEFLEAELDKSAIKHSFYKISAETRNCIAILHGGYQTEILEQGPYVSAKESKGFLEFFEKLLPKLEVVAISGSLPKGVPVDYYSQMIAICKQHQVPIVLDCSGQALLEVLNGAAKPTVIKPNTEELSQIMEREITNDVAVLKHALASPIFSGIDWIIVSLGSQGAFAKHGQTFYKVTIPKIAVVNPVGSGDSTVAGITSALAAGASDEKLLKKANTLGMLNAQEKLTGHVNLENYDNLYQQIEVAEV.

It belongs to the carbohydrate kinase PfkB family. LacC subfamily.

The catalysed reaction is D-tagatofuranose 6-phosphate + ATP = D-tagatofuranose 1,6-bisphosphate + ADP + H(+). The protein operates within carbohydrate metabolism; D-tagatose 6-phosphate degradation; D-glyceraldehyde 3-phosphate and glycerone phosphate from D-tagatose 6-phosphate: step 1/2. This Streptococcus mutans serotype c (strain ATCC 700610 / UA159) protein is Tagatose-6-phosphate kinase.